Here is a 138-residue protein sequence, read N- to C-terminus: Putative pre-16S rRNA nuclease (138 aa).

This sequence belongs to the YqgF nuclease family.

It is found in the cytoplasm. In terms of biological role, could be a nuclease involved in processing of the 5'-end of pre-16S rRNA. The sequence is that of Putative pre-16S rRNA nuclease from Salmonella schwarzengrund (strain CVM19633).